Reading from the N-terminus, the 96-residue chain is Mitochondrial import inner membrane translocase subunit Tim13-A (96 aa).

Positions 47–70 (CFRKCIGKPGGSLDNSEQKCIAMC) match the Twin CX3C motif motif. 2 disulfide bridges follow: cysteine 47-cysteine 70 and cysteine 51-cysteine 66.

The protein belongs to the small Tim family. As to quaternary structure, heterohexamer; composed of 3 copies of TIMM8 (TIMM8A or TIMM8B) and 3 copies of TIMM13, named soluble 70 kDa complex. Associates with the TIM22 complex, whose core is composed of TIMM22.

The protein localises to the mitochondrion inner membrane. In terms of biological role, mitochondrial intermembrane chaperone that participates in the import and insertion of some multi-pass transmembrane proteins into the mitochondrial inner membrane. Also required for the transfer of beta-barrel precursors from the TOM complex to the sorting and assembly machinery (SAM complex) of the outer membrane. Acts as a chaperone-like protein that protects the hydrophobic precursors from aggregation and guide them through the mitochondrial intermembrane space. The TIMM8-TIMM13 complex mediates the import of some proteins while the predominant TIMM9-TIMM10 70 kDa complex mediates the import of much more proteins. This chain is Mitochondrial import inner membrane translocase subunit Tim13-A (timm13-a), found in Xenopus laevis (African clawed frog).